Here is a 452-residue protein sequence, read N- to C-terminus: ADP-dependent glucose/glucosamine kinase (452 aa).

Positions 1–452 constitute an ADPK domain; it reads MSWDEMYRDA…AFVSEFSLSS (452 aa). D-glucose is bound by residues aspartate 33, glutamate 87, 111–112, and histidine 174; that span reads GQ. Glutamate 264 contributes to the Mg(2+) binding site. Asparagine 290 is a binding site for ADP. Glutamate 293 is a Mg(2+) binding site. ADP is bound by residues 339-340, valine 426, and glycine 436; that span reads HT. Residue aspartate 437 coordinates D-glucose. Residue aspartate 437 participates in Mg(2+) binding. Aspartate 437 (proton acceptor) is an active-site residue.

Belongs to the ADP-dependent glucokinase family. The cofactor is Mg(2+).

It is found in the cytoplasm. The enzyme catalyses D-glucose + ADP = D-glucose 6-phosphate + AMP + H(+). It catalyses the reaction D-glucosamine + ADP = D-glucosamine 6-phosphate + AMP + H(+). The protein operates within carbohydrate degradation; glycolysis. Catalyzes the ADP-dependent phosphorylation of D-glucose to D-glucose 6-phosphate and glucosamine to glucosamine 6-phosphate. The polypeptide is ADP-dependent glucose/glucosamine kinase (Pyrococcus abyssi (strain GE5 / Orsay)).